A 486-amino-acid polypeptide reads, in one-letter code: Glutamyl-tRNA(Gln) amidotransferase subunit A (486 aa).

Active-site charge relay system residues include Lys74 and Ser149. Ser173 functions as the Acyl-ester intermediate in the catalytic mechanism.

Belongs to the amidase family. GatA subfamily. As to quaternary structure, heterotrimer of A, B and C subunits.

The enzyme catalyses L-glutamyl-tRNA(Gln) + L-glutamine + ATP + H2O = L-glutaminyl-tRNA(Gln) + L-glutamate + ADP + phosphate + H(+). Allows the formation of correctly charged Gln-tRNA(Gln) through the transamidation of misacylated Glu-tRNA(Gln) in organisms which lack glutaminyl-tRNA synthetase. The reaction takes place in the presence of glutamine and ATP through an activated gamma-phospho-Glu-tRNA(Gln). This Prochlorococcus marinus (strain NATL2A) protein is Glutamyl-tRNA(Gln) amidotransferase subunit A.